The primary structure comprises 690 residues: Peroxidase (690 aa).

The signal sequence occupies residues 1–20 (MIRARDLLLLALLGFISSAL). Residues Cys100 and Cys112 are joined by a disulfide bond. Catalysis depends on His185, which acts as the Proton acceptor. An N-linked (GlcNAc...) asparagine glycan is attached at Asn310. The cysteines at positions 315 and 324 are disulfide-linked. His437 serves as a coordination point for heme b. Intrachain disulfides connect Cys536–Cys592 and Cys636–Cys662.

Belongs to the peroxidase family. XPO subfamily. The cofactor is heme b.

The protein localises to the secreted. The catalysed reaction is 2 a phenolic donor + H2O2 = 2 a phenolic radical donor + 2 H2O. In terms of biological role, involved in the chorion hardening process, through protein cross-linking mediated by the formation of di- and tri-tyrosine bonds. In Drosophila melanogaster (Fruit fly), this protein is Peroxidase (Pxd).